Here is a 266-residue protein sequence, read N- to C-terminus: MGGVKRKIAIEKIQNKNPRAVSFSKRRKGLYSKASELCLLSDAEIAIIATPVSSNSNAAFYSFGHSSVDNVVAAFLANQRPCDERFWWEDESLLKSENLEELREAMDSMSTMLRDLKELEKQRDHQTQTLIHQPCSARVCIQDYVTVNFDGFNTEEQTLAVSDNSNNNGLLGNLDECNEDFDDLDQIFDTVTNSEFLSVNLEMDDVTVNSEGNTEEQTLAVSDNSNNNGLLGNLDECNEDFDDLDQIIEYLTSSEALSMNLKMDDV.

One can recognise an MADS-box domain in the interval 3 to 63 (GVKRKIAIEK…SNSNAAFYSF (61 aa)). Positions 88–130 (WEDESLLKSENLEELREAMDSMSTMLRDLKELEKQRDHQTQTL) form a coiled coil.

In terms of assembly, interacts with AGL27 and AGL62.

Its subcellular location is the nucleus. In terms of biological role, putative transcription factor. This is Agamous-like MADS-box protein AGL97 (AGL97) from Arabidopsis thaliana (Mouse-ear cress).